A 47-amino-acid polypeptide reads, in one-letter code: Delta-actitoxin-Cgg1b (47 aa).

Position 3 is a hydroxyproline (P3). Disulfide bonds link C4-C44, C6-C34, and C27-C45.

The protein belongs to the sea anemone sodium channel inhibitory toxin family. Type I subfamily.

Its subcellular location is the secreted. The protein resides in the nematocyst. In terms of biological role, binds voltage-dependently at site 3 of sodium channels (Nav) and inhibits the inactivation, thereby blocking neuronal transmission. This Condylactis gigantea (Giant Caribbean anemone) protein is Delta-actitoxin-Cgg1b.